Here is a 305-residue protein sequence, read N- to C-terminus: Nod factor export ATP-binding protein I (305 aa).

The ABC transporter domain occupies 8–237 (IDLVGVRKSF…HIGCNVIEIY (230 aa)). 40–47 (GPNGAGKS) is a binding site for ATP.

This sequence belongs to the ABC transporter superfamily. Lipooligosaccharide exporter (TC 3.A.1.102) family. In terms of assembly, the complex is composed of two ATP-binding proteins (NodI) and two transmembrane proteins (NodJ).

It localises to the cell inner membrane. In terms of biological role, part of the ABC transporter complex NodIJ involved in the export of the nodulation factors (Nod factors), the bacterial signal molecules that induce symbiosis and subsequent nodulation induction. Nod factors are LCO (lipo-chitin oligosaccharide), a modified beta-1,4-linked N-acetylglucosamine oligosaccharide. This subunit is responsible for energy coupling to the transport system. The chain is Nod factor export ATP-binding protein I from Bradyrhizobium sp. (strain SNU001).